Consider the following 635-residue polypeptide: DNA mismatch repair protein MutL (635 aa).

The interval 359-399 (GTNKYAQPEAAKSSAAEQAVARERSSARERAAPAYKEDHPY) is disordered. Over residues 364–377 (AQPEAAKSSAAEQA) the composition is skewed to low complexity. Residues 378–399 (VARERSSARERAAPAYKEDHPY) are compositionally biased toward basic and acidic residues.

Belongs to the DNA mismatch repair MutL/HexB family.

This protein is involved in the repair of mismatches in DNA. It is required for dam-dependent methyl-directed DNA mismatch repair. May act as a 'molecular matchmaker', a protein that promotes the formation of a stable complex between two or more DNA-binding proteins in an ATP-dependent manner without itself being part of a final effector complex. This Yersinia pseudotuberculosis serotype O:1b (strain IP 31758) protein is DNA mismatch repair protein MutL.